The chain runs to 863 residues: Valine--tRNA ligase (863 aa).

The 'HIGH' region signature appears at 43–53; sequence PYPTGSFHIGH. The short motif at 517–521 is the 'KMSKS' region element; the sequence is KMSKS. An ATP-binding site is contributed by K520.

It belongs to the class-I aminoacyl-tRNA synthetase family. ValS type 2 subfamily.

The protein localises to the cytoplasm. It catalyses the reaction tRNA(Val) + L-valine + ATP = L-valyl-tRNA(Val) + AMP + diphosphate. In terms of biological role, catalyzes the attachment of valine to tRNA(Val). As ValRS can inadvertently accommodate and process structurally similar amino acids such as threonine, to avoid such errors, it has a 'posttransfer' editing activity that hydrolyzes mischarged Thr-tRNA(Val) in a tRNA-dependent manner. The protein is Valine--tRNA ligase of Archaeoglobus fulgidus (strain ATCC 49558 / DSM 4304 / JCM 9628 / NBRC 100126 / VC-16).